A 419-amino-acid polypeptide reads, in one-letter code: Menaquinone reductase, integral membrane subunit (419 aa).

The next 10 helical transmembrane spans lie at 23-43 (LSKF…GLYA), 61-81 (FGFG…AGAF), 98-118 (IINL…LVLV), 143-163 (VIFC…PLIL), 176-196 (AVAH…AFLS), 221-241 (FFIW…SGPV), 270-290 (IAGT…YAWA), 316-336 (LWAE…VPAL), 341-361 (VLFY…RYVM), and 383-403 (WAEW…LSLS).

This sequence belongs to the NrfD family. The Qrc complex is composed of four subunits: QrcA, QrcB, QrcC and QrcD. Can form a supercomplex with the [NiFe] hydrogenase HynA1 and the tetraheme Type I cytochrome c3 TpIc(3), its physiological electron donors.

The protein localises to the cell inner membrane. Functionally, component of the respiratory Qrc complex, that catalyzes the reduction of the menaquinone pool using electrons transferred from the reduced periplasmic cytochrome c3, and which is probably involved in sulfate respiration. Is likely essential for growth on H(2) or formate since the periplasmic hydrogenases and/or formate dehydrogenases act as primary electron donors for the Qrc complex. The QrcD subunit anchors the protein complex to the membrane and likely interacts with the quinone pool. This chain is Menaquinone reductase, integral membrane subunit, found in Nitratidesulfovibrio vulgaris (strain ATCC 29579 / DSM 644 / CCUG 34227 / NCIMB 8303 / VKM B-1760 / Hildenborough) (Desulfovibrio vulgaris).